A 591-amino-acid chain; its full sequence is Homeobox domain-containing transcription factor HOB1 (591 aa).

The span at 1 to 15 shows a compositional bias: basic and acidic residues; sequence MEGKNEDMHTPRGPE. 2 disordered regions span residues 1–37 and 148–168; these read MEGK…DMLG and IAGP…RSPA. A DNA-binding region (homeobox) is located at residues 176 to 223; that stretch reads IAILRESYARNPNPDRKELERLAARTGRPWNKIREYFRQRRNKLRGLE. 2 disordered regions span residues 420–463 and 543–563; these read DAGL…PRES and DAIE…ALTE. Residues 427–441 are compositionally biased toward acidic residues; sequence QGEEDQPPTVEESDQ. Over residues 543-560 the composition is skewed to basic and acidic residues; it reads DAIERRNAGESKRKRDDA.

The protein localises to the nucleus. Its function is as follows. General stress-responsive transcription factor that governs multiple stress responses and adaptations. Plays a key role in virulence. Mediates the expression of LAC1, which is the major laccase involved in melanin synthesis. Positively regulates BZP4 induction under conditions of nutrient starvation and basal expression levels of MBS1 and USV101, 3 major transcription factors that independently contribute to melanin production. Also acts as a key regulator of ergosterol gene expression. In Cryptococcus neoformans var. grubii serotype A (strain H99 / ATCC 208821 / CBS 10515 / FGSC 9487) (Filobasidiella neoformans var. grubii), this protein is Homeobox domain-containing transcription factor HOB1.